Reading from the N-terminus, the 142-residue chain is Sec-independent protein translocase protein TatB (142 aa).

A helical transmembrane segment spans residues 1–21 (MFDIGASELLVLVIVAIVVIG). Positions 75–142 (RETAAQETAA…PAARPGSQQP (68 aa)) are disordered. The segment covering 76 to 94 (ETAAQETAAAQGQTPAAAE) has biased composition (low complexity). Residues 123–133 (AKVEARVEEAP) show a composition bias toward basic and acidic residues.

The protein belongs to the TatB family. The Tat system comprises two distinct complexes: a TatABC complex, containing multiple copies of TatA, TatB and TatC subunits, and a separate TatA complex, containing only TatA subunits. Substrates initially bind to the TatABC complex, which probably triggers association of the separate TatA complex to form the active translocon.

Its subcellular location is the cell inner membrane. Its function is as follows. Part of the twin-arginine translocation (Tat) system that transports large folded proteins containing a characteristic twin-arginine motif in their signal peptide across membranes. Together with TatC, TatB is part of a receptor directly interacting with Tat signal peptides. TatB may form an oligomeric binding site that transiently accommodates folded Tat precursor proteins before their translocation. The protein is Sec-independent protein translocase protein TatB of Novosphingobium aromaticivorans (strain ATCC 700278 / DSM 12444 / CCUG 56034 / CIP 105152 / NBRC 16084 / F199).